Consider the following 259-residue polypeptide: 3-deoxy-manno-octulosonate cytidylyltransferase (259 aa).

It belongs to the KdsB family.

Its subcellular location is the cytoplasm. It carries out the reaction 3-deoxy-alpha-D-manno-oct-2-ulosonate + CTP = CMP-3-deoxy-beta-D-manno-octulosonate + diphosphate. It participates in nucleotide-sugar biosynthesis; CMP-3-deoxy-D-manno-octulosonate biosynthesis; CMP-3-deoxy-D-manno-octulosonate from 3-deoxy-D-manno-octulosonate and CTP: step 1/1. The protein operates within bacterial outer membrane biogenesis; lipopolysaccharide biosynthesis. Its function is as follows. Activates KDO (a required 8-carbon sugar) for incorporation into bacterial lipopolysaccharide in Gram-negative bacteria. In Alkalilimnicola ehrlichii (strain ATCC BAA-1101 / DSM 17681 / MLHE-1), this protein is 3-deoxy-manno-octulosonate cytidylyltransferase.